A 365-amino-acid chain; its full sequence is uncharacterized protein (365 aa).

Residues 18-46 adopt a coiled-coil conformation; sequence TAQEALTLIEKLDSDYKEKEEKITALSVH.

This is an uncharacterized protein from Bacillus subtilis (strain 168).